The sequence spans 291 residues: 4-diphosphocytidyl-2-C-methyl-D-erythritol kinase (291 aa).

The active site involves Lys8. 89-99 (PIGAGVGGGSS) contributes to the ATP binding site. Residue Asp131 is part of the active site.

This sequence belongs to the GHMP kinase family. IspE subfamily.

The enzyme catalyses 4-CDP-2-C-methyl-D-erythritol + ATP = 4-CDP-2-C-methyl-D-erythritol 2-phosphate + ADP + H(+). The protein operates within isoprenoid biosynthesis; isopentenyl diphosphate biosynthesis via DXP pathway; isopentenyl diphosphate from 1-deoxy-D-xylulose 5-phosphate: step 3/6. Its function is as follows. Catalyzes the phosphorylation of the position 2 hydroxy group of 4-diphosphocytidyl-2C-methyl-D-erythritol. The sequence is that of 4-diphosphocytidyl-2-C-methyl-D-erythritol kinase from Chlamydia caviae (strain ATCC VR-813 / DSM 19441 / 03DC25 / GPIC) (Chlamydophila caviae).